We begin with the raw amino-acid sequence, 241 residues long: Proteasome subunit alpha (241 aa).

The protein belongs to the peptidase T1A family. The 20S proteasome core is composed of 14 alpha and 14 beta subunits that assemble into four stacked heptameric rings, resulting in a barrel-shaped structure. The two inner rings, each composed of seven catalytic beta subunits, are sandwiched by two outer rings, each composed of seven alpha subunits. The catalytic chamber with the active sites is on the inside of the barrel. Has a gated structure, the ends of the cylinder being occluded by the N-termini of the alpha-subunits. Is capped at one or both ends by the proteasome regulatory ATPase, PAN.

The protein localises to the cytoplasm. The formation of the proteasomal ATPase PAN-20S proteasome complex, via the docking of the C-termini of PAN into the intersubunit pockets in the alpha-rings, triggers opening of the gate for substrate entry. Interconversion between the open-gate and close-gate conformations leads to a dynamic regulation of the 20S proteasome proteolysis activity. Component of the proteasome core, a large protease complex with broad specificity involved in protein degradation. In Methanosphaerula palustris (strain ATCC BAA-1556 / DSM 19958 / E1-9c), this protein is Proteasome subunit alpha.